The chain runs to 131 residues: CLAVATA3/ESR (CLE)-related protein ESR1 (131 aa).

The N-terminal stretch at 1–26 (MASRMGMVAIVSLFVCALAASTSVNA) is a signal peptide. The disordered stretch occupies residues 49–131 (RQQQQGGFIG…IGPPPLSDRY (83 aa)). 2 positions are modified to hydroxyproline: proline 81 and proline 84. An O-linked (Ara...) hydroxyproline glycan is attached at proline 84.

It belongs to the CLV3/ESR signal peptide family. In terms of processing, the O-glycosylation (arabinosylation) of the hydroxyproline Pro-84 enhances binding affinity of the ESR1p peptide for its receptor. In terms of tissue distribution, seed endosperm.

The protein localises to the secreted. It localises to the extracellular space. Functionally, extracellular signal peptide that regulates cell fate. The protein is CLAVATA3/ESR (CLE)-related protein ESR1 of Zea mays (Maize).